The primary structure comprises 217 residues: 3-demethoxyubiquinol 3-hydroxylase (217 aa).

Residues Glu-66, Glu-96, His-99, Glu-148, Glu-180, and His-183 each coordinate Fe cation.

The protein belongs to the COQ7 family. It depends on Fe cation as a cofactor.

Its subcellular location is the cell membrane. It catalyses the reaction a 5-methoxy-2-methyl-3-(all-trans-polyprenyl)benzene-1,4-diol + AH2 + O2 = a 3-demethylubiquinol + A + H2O. It functions in the pathway cofactor biosynthesis; ubiquinone biosynthesis. Functionally, catalyzes the hydroxylation of 2-nonaprenyl-3-methyl-6-methoxy-1,4-benzoquinol during ubiquinone biosynthesis. The polypeptide is 3-demethoxyubiquinol 3-hydroxylase (Xanthomonas campestris pv. campestris (strain 8004)).